Reading from the N-terminus, the 120-residue chain is Ribonuclease P protein component (120 aa).

The protein belongs to the RnpA family. Consists of a catalytic RNA component (M1 or rnpB) and a protein subunit.

The catalysed reaction is Endonucleolytic cleavage of RNA, removing 5'-extranucleotides from tRNA precursor.. In terms of biological role, RNaseP catalyzes the removal of the 5'-leader sequence from pre-tRNA to produce the mature 5'-terminus. It can also cleave other RNA substrates such as 4.5S RNA. The protein component plays an auxiliary but essential role in vivo by binding to the 5'-leader sequence and broadening the substrate specificity of the ribozyme. The sequence is that of Ribonuclease P protein component from Microcystis aeruginosa (strain NIES-843 / IAM M-2473).